The primary structure comprises 127 residues: Aspartate 1-decarboxylase (127 aa).

Ser25 serves as the catalytic Schiff-base intermediate with substrate; via pyruvic acid. Ser25 bears the Pyruvic acid (Ser) mark. Thr57 lines the substrate pocket. The Proton donor role is filled by Tyr58. 73–75 (GAA) contributes to the substrate binding site.

This sequence belongs to the PanD family. In terms of assembly, heterooctamer of four alpha and four beta subunits. Pyruvate is required as a cofactor. In terms of processing, is synthesized initially as an inactive proenzyme, which is activated by self-cleavage at a specific serine bond to produce a beta-subunit with a hydroxyl group at its C-terminus and an alpha-subunit with a pyruvoyl group at its N-terminus.

It localises to the cytoplasm. It catalyses the reaction L-aspartate + H(+) = beta-alanine + CO2. It participates in cofactor biosynthesis; (R)-pantothenate biosynthesis; beta-alanine from L-aspartate: step 1/1. In terms of biological role, catalyzes the pyruvoyl-dependent decarboxylation of aspartate to produce beta-alanine. The chain is Aspartate 1-decarboxylase from Bacillus cereus (strain B4264).